Reading from the N-terminus, the 460-residue chain is Ammonium transporter Rh type C (460 aa).

At M1–W9 the chain is on the cytoplasmic side. The chain crosses the membrane as a helical span at residues R10 to V30. Residues R31 to Y61 lie on the Extracellular side of the membrane. The N-linked (GlcNAc...) asparagine glycan is linked to N48. A helical transmembrane segment spans residues P62–L82. Residues Q83–G86 are Cytoplasmic-facing. The helical transmembrane segment at F87 to M107 threads the bilayer. Residues Q108–N125 lie on the Extracellular side of the membrane. The chain crosses the membrane as a helical span at residues L126–G145. Residues K146–Q151 are Cytoplasmic-facing. Residues L152–L174 form a helical membrane-spanning segment. The Extracellular portion of the chain corresponds to E175–A179. A helical transmembrane segment spans residues G180–L200. At Y201–D219 the chain is on the cytoplasmic side. Residues L220–V240 form a helical membrane-spanning segment. Residues S241 to A251 lie on the Extracellular side of the membrane. A helical transmembrane segment spans residues I252 to L272. At H273 to N285 the chain is on the cytoplasmic side. Residues A286–G306 form a helical membrane-spanning segment. Residue S307 is a topological domain, extracellular. Residues L308–F328 traverse the membrane as a helical segment. Residues L329–G340 are Cytoplasmic-facing. Residues I341–A361 form a helical membrane-spanning segment. Topologically, residues S362 to A396 are extracellular. A helical transmembrane segment spans residues A397 to L417. Residues K418 to P460 lie on the Cytoplasmic side of the membrane.

It belongs to the ammonium transporter (TC 2.A.49) family. Rh subfamily. Homotrimer. Post-translationally, N-glycosylated.

It is found in the cell membrane. It localises to the apical cell membrane. It catalyses the reaction NH4(+)(in) = NH4(+)(out). The catalysed reaction is methylamine(out) = methylamine(in). It carries out the reaction CO2(out) = CO2(in). Ammonium transporter involved in the maintenance of acid-base homeostasis. Transports ammonium and its related derivative methylammonium across the plasma membrane of epithelial cells likely contributing to renal transepithelial ammonia transport and ammonia metabolism. Postulated to primarily mediate an electroneutral bidirectional transport of NH3 ammonia species according to a mechanism that implies interaction of an NH4(+) ion with acidic residues of the pore entry followed by dissociation of NH4(+) into NH3 and H(+). As a result NH3 transits through the central pore and is protonated on the extracellular side reforming NH4(+). May act as a CO2 channel providing for renal acid secretion. The polypeptide is Ammonium transporter Rh type C (RHCG) (Sus scrofa (Pig)).